A 102-amino-acid polypeptide reads, in one-letter code: Small integral membrane protein 29 (102 aa).

The N-linked (GlcNAc...) asparagine glycan is linked to N3. A helical transmembrane segment spans residues V21 to V41.

The protein resides in the membrane. The polypeptide is Small integral membrane protein 29 (Mus musculus (Mouse)).